Reading from the N-terminus, the 370-residue chain is Spermidine/putrescine import ATP-binding protein PotA (370 aa).

Positions 11–241 constitute an ABC transporter domain; sequence IELRSITKSY…PKNLFVAKFI (231 aa). 43 to 50 serves as a coordination point for ATP; the sequence is GPSGCGKT.

Belongs to the ABC transporter superfamily. Spermidine/putrescine importer (TC 3.A.1.11.1) family. In terms of assembly, the complex is composed of two ATP-binding proteins (PotA), two transmembrane proteins (PotB and PotC) and a solute-binding protein (PotD).

The protein resides in the cell inner membrane. It carries out the reaction ATP + H2O + polyamine-[polyamine-binding protein]Side 1 = ADP + phosphate + polyamineSide 2 + [polyamine-binding protein]Side 1.. Part of the ABC transporter complex PotABCD involved in spermidine/putrescine import. Responsible for energy coupling to the transport system. This chain is Spermidine/putrescine import ATP-binding protein PotA, found in Pasteurella multocida (strain Pm70).